A 358-amino-acid polypeptide reads, in one-letter code: 4-diphosphocytidyl-2-C-methyl-D-erythritol kinase (358 aa).

Lys-24 is an active-site residue. Position 138 to 148 (138 to 148 (PVAGGMAGGSA)) interacts with ATP. The active site involves Asp-186.

Belongs to the GHMP kinase family. IspE subfamily.

It carries out the reaction 4-CDP-2-C-methyl-D-erythritol + ATP = 4-CDP-2-C-methyl-D-erythritol 2-phosphate + ADP + H(+). It functions in the pathway isoprenoid biosynthesis; isopentenyl diphosphate biosynthesis via DXP pathway; isopentenyl diphosphate from 1-deoxy-D-xylulose 5-phosphate: step 3/6. In terms of biological role, catalyzes the phosphorylation of the position 2 hydroxy group of 4-diphosphocytidyl-2C-methyl-D-erythritol. The chain is 4-diphosphocytidyl-2-C-methyl-D-erythritol kinase from Corynebacterium jeikeium (strain K411).